Here is a 185-residue protein sequence, read N- to C-terminus: Putative manganese efflux pump MntP (185 aa).

The next 6 helical transmembrane spans lie at 3–23 (IFTL…VSLA), 40–60 (LLFV…VSVI), 64–84 (FDAY…LRMI), 102–122 (TFSR…AVGI), 124–144 (LSLA…FVLI), and 165–185 (EIFG…DAMM).

Belongs to the MntP (TC 9.B.29) family.

It localises to the cell inner membrane. Probably functions as a manganese efflux pump. The polypeptide is Putative manganese efflux pump MntP (Elusimicrobium minutum (strain Pei191)).